Consider the following 226-residue polypeptide: Eukaryotic translation initiation factor 3 subunit K (226 aa).

Residues 44 to 202 (YSLEVNLCLL…IVLPQNEFNH (159 aa)) enclose the PCI domain.

It belongs to the eIF-3 subunit K family. In terms of assembly, component of the eukaryotic translation initiation factor 3 (eIF-3) complex.

The protein localises to the cytoplasm. Functionally, component of the eukaryotic translation initiation factor 3 (eIF-3) complex, which is involved in protein synthesis of a specialized repertoire of mRNAs and, together with other initiation factors, stimulates binding of mRNA and methionyl-tRNAi to the 40S ribosome. The eIF-3 complex specifically targets and initiates translation of a subset of mRNAs involved in cell proliferation. The protein is Eukaryotic translation initiation factor 3 subunit K (TIF3K1) of Arabidopsis thaliana (Mouse-ear cress).